A 749-amino-acid chain; its full sequence is Basic juvenile hormone-suppressible protein 2 (749 aa).

Positions 1-14 (MRAVLLFVVSLAAL) are cleaved as a signal peptide.

The protein belongs to the hemocyanin family. In terms of tissue distribution, fat body, and hemolymph of larvae.

The chain is Basic juvenile hormone-suppressible protein 2 (BJSP-2) from Trichoplusia ni (Cabbage looper).